A 530-amino-acid chain; its full sequence is Putative ABC transporter ATP-binding protein SSO1893 (530 aa).

2 consecutive ABC transporter domains span residues 6-243 and 282-516; these read IRDL…LGLE and ILFA…EPPL. Residues 38–45 and 314–321 each bind ATP; these read GRSGSGKS and GKNGSGKT.

Belongs to the ABC transporter superfamily.

It is found in the cell membrane. Probably part of an ABC transporter complex. Responsible for energy coupling to the transport system. In Saccharolobus solfataricus (strain ATCC 35092 / DSM 1617 / JCM 11322 / P2) (Sulfolobus solfataricus), this protein is Putative ABC transporter ATP-binding protein SSO1893.